The following is a 457-amino-acid chain: Transmembrane protein 143 (457 aa).

The next 2 membrane-spanning stretches (helical) occupy residues 264–284 (ILNV…GMVV) and 285–305 (LSDL…FMGL). The residue at position 316 (Ser316) is a Phosphoserine. The segment covering 429-439 (LSSPKSAPSDD) has biased composition (polar residues). Residues 429–457 (LSSPKSAPSDDNSLEKPLGPAQPSHLVGN) form a disordered region.

The protein localises to the membrane. The polypeptide is Transmembrane protein 143 (TMEM143) (Bos taurus (Bovine)).